The chain runs to 747 residues: Protein O-mannosyl-transferase 1 (747 aa).

Transmembrane regions (helical) follow at residues 8 to 28, 40 to 60, 68 to 88, 99 to 119, 122 to 142, 154 to 174, 183 to 203, 206 to 226, and 269 to 289; these read PVVV…MGLL, VVFD…QIFF, FGHM…NFLW, VPVW…VPMA, IVLE…LMLI, LLES…LKFF, SLSW…AVGI, MGVF…WHLL, and LLVI…ILVF. MIR domains are found at residues 318–381, 392–449, and 453–513; these read PLEV…VKDP, PRPV…LEIV, and SDTD…VEEH. N-linked (GlcNAc...) asparagine glycans are attached at residues Asn435, Asn471, and Asn539. Transmembrane regions (helical) follow at residues 597-617, 636-656, and 661-681; these read IVIW…SLWY, WVLA…PFFL, and LFLY…PVVL.

It belongs to the glycosyltransferase 39 family. In terms of assembly, interacts with POMT2. As to expression, widely expressed. Highly expressed in testis, heart and pancreas. Detected at lower levels in kidney, skeletal muscle, brain, placenta, lung and liver.

It localises to the endoplasmic reticulum membrane. The enzyme catalyses a di-trans,poly-cis-dolichyl beta-D-mannosyl phosphate + L-seryl-[protein] = 3-O-(alpha-D-mannosyl)-L-seryl-[protein] + a di-trans,poly-cis-dolichyl phosphate + H(+). It carries out the reaction a di-trans,poly-cis-dolichyl beta-D-mannosyl phosphate + L-threonyl-[protein] = 3-O-(alpha-D-mannosyl)-L-threonyl-[protein] + a di-trans,poly-cis-dolichyl phosphate + H(+). It participates in protein modification; protein glycosylation. Its activity is regulated as follows. Slightly activated by Mg(2+) and inhibited by both Ca(+) and Mn(2+). EDTA ha no effect on activity in vitro. Transfers mannosyl residues to the hydroxyl group of serine or threonine residues. Coexpression of both POMT1 and POMT2 is necessary for enzyme activity, expression of either POMT1 or POMT2 alone is insufficient. Essentially dedicated to O-mannosylation of alpha-DAG1 and few other proteins but not of cadherins and protocaherins. This chain is Protein O-mannosyl-transferase 1 (POMT1), found in Homo sapiens (Human).